The chain runs to 97 residues: Co-chaperonin GroES (97 aa).

It belongs to the GroES chaperonin family. In terms of assembly, heptamer of 7 subunits arranged in a ring. Interacts with the chaperonin GroEL.

It is found in the cytoplasm. Together with the chaperonin GroEL, plays an essential role in assisting protein folding. The GroEL-GroES system forms a nano-cage that allows encapsulation of the non-native substrate proteins and provides a physical environment optimized to promote and accelerate protein folding. GroES binds to the apical surface of the GroEL ring, thereby capping the opening of the GroEL channel. The sequence is that of Co-chaperonin GroES from Enterobacter sp. (strain 638).